The primary structure comprises 298 residues: Plasmodesmata-located protein 7 (298 aa).

An N-terminal signal peptide occupies residues 1-30; that stretch reads MPMAKLRNIIKTLSIFFFLIAATAPSLSSA. At 31–258 the chain is on the extracellular side; the sequence is TSATDTFVFG…YKTNYGGEKT (228 aa). Gnk2-homologous domains lie at 35–139 and 140–240; these read DTFV…NISF and LGQE…TDGA. 6 cysteine pairs are disulfide-bonded: Cys-42/Cys-117, Cys-93/Cys-102, Cys-105/Cys-130, Cys-152/Cys-218, Cys-194/Cys-203, and Cys-206/Cys-231. A helical transmembrane segment spans residues 259–279; it reads FAIIIGLLAAVVLLIIFLLFL. Positions 259-279 are necessary and sufficient for plasmodesmal targeting; it reads FAIIIGLLAAVVLLIIFLLFL. The Cytoplasmic portion of the chain corresponds to 280-298; it reads RGVCSRGGDFSILHSFTLI.

This sequence belongs to the cysteine-rich repeat secretory protein family. Plasmodesmata-located proteins (PDLD) subfamily. As to quaternary structure, (Microbial infection) Interacts with Grapevine fanleaf virus (GFLV) 2B-MP. In terms of tissue distribution, highly expressed in lateral root and elongation zone.

Its subcellular location is the cell membrane. It localises to the cell junction. The protein localises to the plasmodesma. In terms of biological role, modulates cell-to-cell trafficking. This is Plasmodesmata-located protein 7 from Arabidopsis thaliana (Mouse-ear cress).